The sequence spans 181 residues: dTDP-4-dehydrorhamnose 3,5-epimerase (181 aa).

Substrate is bound by residues Arg23, Glu28, 47–49, and Arg59; that span reads QDN. Catalysis depends on His62, which acts as the Proton acceptor. Substrate contacts are provided by Lys72 and His119. The active-site Proton donor is Tyr132. 2 residues coordinate substrate: Glu143 and Lys167.

The protein belongs to the dTDP-4-dehydrorhamnose 3,5-epimerase family. In terms of assembly, homodimer.

It catalyses the reaction dTDP-4-dehydro-6-deoxy-alpha-D-glucose = dTDP-4-dehydro-beta-L-rhamnose. It functions in the pathway carbohydrate biosynthesis; dTDP-L-rhamnose biosynthesis. It participates in bacterial outer membrane biogenesis; LPS O-antigen biosynthesis. Its function is as follows. Catalyzes the epimerization of the C3' and C5'positions of dTDP-6-deoxy-D-xylo-4-hexulose, forming dTDP-6-deoxy-L-lyxo-4-hexulose. This chain is dTDP-4-dehydrorhamnose 3,5-epimerase (rfbC), found in Shigella flexneri.